A 92-amino-acid chain; its full sequence is UPF0473 protein BCE33L4129 (92 aa).

The protein belongs to the UPF0473 family.

In Bacillus cereus (strain ZK / E33L), this protein is UPF0473 protein BCE33L4129.